The following is an 876-amino-acid chain: Alanine--tRNA ligase (876 aa).

Residues H564, H568, C666, and H670 each coordinate Zn(2+).

It belongs to the class-II aminoacyl-tRNA synthetase family. Zn(2+) serves as cofactor.

Its subcellular location is the cytoplasm. It carries out the reaction tRNA(Ala) + L-alanine + ATP = L-alanyl-tRNA(Ala) + AMP + diphosphate. Catalyzes the attachment of alanine to tRNA(Ala) in a two-step reaction: alanine is first activated by ATP to form Ala-AMP and then transferred to the acceptor end of tRNA(Ala). Also edits incorrectly charged Ser-tRNA(Ala) and Gly-tRNA(Ala) via its editing domain. The sequence is that of Alanine--tRNA ligase from Porphyromonas gingivalis (strain ATCC BAA-308 / W83).